The chain runs to 283 residues: Diaminopimelate epimerase (283 aa).

Asn13 and Asn67 together coordinate substrate. The active-site Proton donor is the Cys76. Residues 77-78 (GN), Asn166, Asn199, and 217-218 (ER) contribute to the substrate site. Residue Cys226 is the Proton acceptor of the active site. Residue 227-228 (GT) participates in substrate binding.

Belongs to the diaminopimelate epimerase family. As to quaternary structure, homodimer.

It is found in the cytoplasm. It catalyses the reaction (2S,6S)-2,6-diaminopimelate = meso-2,6-diaminopimelate. It functions in the pathway amino-acid biosynthesis; L-lysine biosynthesis via DAP pathway; DL-2,6-diaminopimelate from LL-2,6-diaminopimelate: step 1/1. Catalyzes the stereoinversion of LL-2,6-diaminopimelate (L,L-DAP) to meso-diaminopimelate (meso-DAP), a precursor of L-lysine and an essential component of the bacterial peptidoglycan. This is Diaminopimelate epimerase from Desulforapulum autotrophicum (strain ATCC 43914 / DSM 3382 / VKM B-1955 / HRM2) (Desulfobacterium autotrophicum).